Here is a 667-residue protein sequence, read N- to C-terminus: Fatty acyl-CoA synthetase A (667 aa).

This sequence belongs to the ATP-dependent AMP-binding enzyme family.

It is found in the endosome membrane. It catalyses the reaction a long-chain fatty acid + ATP + CoA = a long-chain fatty acyl-CoA + AMP + diphosphate. Functionally, long chain fatty acid acyl-CoA synthetases catalyze the formation of a thiester bond between a free fatty acid and coenzyme A during fatty acid metabolic process. May mediate fatty acid retrieval from the lumen of endosomes into the cytoplasm. This chain is Fatty acyl-CoA synthetase A (fcsA), found in Dictyostelium discoideum (Social amoeba).